Reading from the N-terminus, the 444-residue chain is Methylenetetrahydrofolate--tRNA-(uracil-5-)-methyltransferase TrmFO (444 aa).

10 to 15 lines the FAD pocket; sequence GAGLAG.

Belongs to the MnmG family. TrmFO subfamily. Requires FAD as cofactor.

It is found in the cytoplasm. It catalyses the reaction uridine(54) in tRNA + (6R)-5,10-methylene-5,6,7,8-tetrahydrofolate + NADH + H(+) = 5-methyluridine(54) in tRNA + (6S)-5,6,7,8-tetrahydrofolate + NAD(+). The enzyme catalyses uridine(54) in tRNA + (6R)-5,10-methylene-5,6,7,8-tetrahydrofolate + NADPH + H(+) = 5-methyluridine(54) in tRNA + (6S)-5,6,7,8-tetrahydrofolate + NADP(+). In terms of biological role, catalyzes the folate-dependent formation of 5-methyl-uridine at position 54 (M-5-U54) in all tRNAs. The polypeptide is Methylenetetrahydrofolate--tRNA-(uracil-5-)-methyltransferase TrmFO (Streptococcus pneumoniae (strain ATCC 700669 / Spain 23F-1)).